A 1118-amino-acid chain; its full sequence is Collagenase ColG (1118 aa).

The first 45 residues, 1–45 (MKKNILKILMDSYSKESKIQTVRRVTSVSLLAVYLTMNTSSLVLA), serve as a signal peptide directing secretion. Positions 46–110 (KPIENTNDTS…KSKSTLRSAS (65 aa)) are excised as a propeptide. The segment at 111 to 786 (IANTNSEKYD…QYDVVFHGVL (676 aa)) is S1 metalloprotease domain, degrades both FALGPA (furylacryloyl-Leu-Gly-Pro-Ala) and type I collagen. The tract at residues 119–388 (YDFEYLNGLS…AMERITWDYD (270 aa)) is activator domain required for full activity on collagen. The tract at residues 389 to 670 (GIGSNGKKVD…IQELADKYQG (282 aa)) is catalytic subdomain. Residues 396 to 1118 (KVDHDKFLDD…SGNYELRVNK (723 aa)) are degrades soluble FALGPA peptide (furylacryloyl-Leu-Gly-Pro-Ala) but not type I collagen. Glu-498 contributes to the Ca(2+) binding site. His-523 contributes to the Zn(2+) binding site. Glu-524 is a catalytic residue. His-527 lines the Zn(2+) pocket. Residues Ala-531, Val-535, and Gly-537 each contribute to the Ca(2+) site. Glu-555 contributes to the Zn(2+) binding site. Residues 679–790 (DYLKDHGYKK…VFHGVLTDNA (112 aa)) form a helper subdomain region. Positions 787–882 (TDNADISNNK…SFTIEIKNED (96 aa)) are S2 domain. 20 residues coordinate Ca(2+): Asn-795, Lys-796, Asp-823, Asp-825, Asp-864, Glu-890, Glu-892, Asn-894, Asp-913, Asp-918, Ala-920, Asp-921, Glu-1009, Glu-1011, Asn-1013, Asp-1014, Ser-1032, Asp-1037, Arg-1039, and Asp-1040. One can recognise a PKD domain in the interval 797–885 (APIAKVTGPS…IEIKNEDTTT (89 aa)). The S3a collagen-binding domain stretch occupies residues 886–1003 (PITKEMEPND…SYSLNIKGLG (118 aa)). Residues 1008 to 1118 (KEKENNDSSD…SGNYELRVNK (111 aa)) form an S3b collagen-binding domain region. The interval 1102–1106 (LVYKY) is collagen-binding.

It belongs to the peptidase M9B family. Collagenase subfamily. It depends on Ca(2+) as a cofactor. The cofactor is Zn(2+). Upon purification gives 67 kDa, 78 kDa, 82 kDa and 116 kDa (full-length) proteins all of which have the same N-terminus; only the longest form digests insoluble collagen. At least 2 in vivo isolated forms (C1b and C1c) are missing the second collagen-binding domain, ending on Lys-1006 and Lys-1018 respectively.

It is found in the secreted. The catalysed reaction is Digestion of native collagen in the triple helical region at Xaa-|-Gly bonds. With synthetic peptides, a preference is shown for Gly at P3 and P1', Pro and Ala at P2 and P2', and hydroxyproline, Ala or Arg at P3'.. Its activity is regulated as follows. Inhibited by 1-10-phenanthroline. Inhibited by peptidomimetic isoamyl-phosphonyl-Gly-Pro-Ala, which binds to Zn(2+). Inhibited by broad-spectrum zinc metalloprotease inhibitor batimastat. N-aryl mercaptoacetamide-based inhibitors have been isolated that act on clostridial collagenases with submicromolar affinity while having negligibile activity on human collagenases. Functionally, clostridial collagenases are among the most efficient degraders of eukaryotic collagen known; saprophytes use collagen as a carbon source while pathogens additionally digest collagen to aid in host colonization. Has both tripeptidylcarboxypeptidase on Gly-X-Y and endopeptidase activities; the endopeptidase cuts within the triple helix region of collagen while tripeptidylcarboxypeptidase successively digests the exposed ends, thus clostridial collagenases can digest large sections of collagen. Active on soluble type I collagen, insoluble collagen, azocoll, soluble PZ-peptide (all collagenase substrates) and gelatin. The full-length protein has collagenase activity, while the in vivo derived C-terminally truncated shorter versions only act on gelatin. In vitro digestion of soluble calf skin collagen fibrils requires both ColG and ColH; ColG forms missing the second collagen-binding domain are also synergistic with ColH, although their overall efficiency is decreased. The activator domain (residues 119-388) and catalytic subdomain (389-670) open and close around substrate using a Gly-rich hinge (387-397), allowing digestion when the protein is closed. Binding of collagen requires Ca(2+) and is inhibited by EGTA; the collagen-binding domain (CBD, S3a plus S3b) specifically recognizes the triple-helical conformation made by 3 collagen protein chains in the triple-helical region. Isolated CBD (S3a plus S3b) binds collagen fibrils and sheets of many tissues. This Hathewaya histolytica (Clostridium histolyticum) protein is Collagenase ColG.